The following is a 338-amino-acid chain: MO25-like protein 2 (338 aa).

The protein belongs to the Mo25 family.

The protein resides in the cytoplasm. It localises to the cytoskeleton. Its subcellular location is the spindle pole. Regulates asymmetric cell division in Q.p neuroblast lineage. Plays a role in cell shedding during embryogenesis. The protein is MO25-like protein 2 (mop-25.2) of Caenorhabditis elegans.